The primary structure comprises 39 residues: Anthranilate phosphoribosyltransferase (39 aa).

Belongs to the anthranilate phosphoribosyltransferase family. As to quaternary structure, homodimer.

The enzyme catalyses N-(5-phospho-beta-D-ribosyl)anthranilate + diphosphate = 5-phospho-alpha-D-ribose 1-diphosphate + anthranilate. It functions in the pathway amino-acid biosynthesis; L-tryptophan biosynthesis; L-tryptophan from chorismate: step 2/5. Functionally, catalyzes the transfer of the phosphoribosyl group of 5-phosphorylribose-1-pyrophosphate (PRPP) to anthranilate to yield N-(5'-phosphoribosyl)-anthranilate (PRA). This chain is Anthranilate phosphoribosyltransferase (trpD), found in Pectobacterium carotovorum (Erwinia carotovora).